We begin with the raw amino-acid sequence, 411 residues long: Probable protein S-acyltransferase 2 (411 aa).

2 helical membrane-spanning segments follow: residues 56-76 and 85-105; these read LTTA…VFLI and SLIL…LFLT. A DHHC domain is found at 160–210; that stretch reads KFCDTCLLYRPPRASHCSICNNCVQRFDHHCPWVGQCIALRNYPYFICFIS. C190 (S-palmitoyl cysteine intermediate) is an active-site residue. 2 helical membrane passes run 205–225 and 245–265; these read FICF…FSWV and FVVL…LTVF. S405 bears the Phosphoserine mark.

The protein belongs to the DHHC palmitoyltransferase family. Expressed in flowers and pollen.

It is found in the cytoplasmic vesicle membrane. The enzyme catalyses L-cysteinyl-[protein] + hexadecanoyl-CoA = S-hexadecanoyl-L-cysteinyl-[protein] + CoA. Palmitoyl acyltransferase. This Arabidopsis thaliana (Mouse-ear cress) protein is Probable protein S-acyltransferase 2 (PAT02).